A 630-amino-acid chain; its full sequence is Plastin-1 (630 aa).

Residue Met-1 is modified to N-acetylmethionine. EF-hand domains follow at residues 11–46 (EELE…ASLP) and 51–86 (KVRE…LKSK). Residues Asp-24, Asp-26, Ser-28, Tyr-30, Glu-35, Asp-64, Asn-66, Asp-68, Lys-70, and Glu-75 each coordinate Ca(2+). 2 actin-binding regions span residues 108 to 381 (TSSI…CLHK) and 382 to 626 (PDNN…GKGL). 4 Calponin-homology (CH) domains span residues 122 to 238 (EEEK…KVGL), 266 to 377 (LSPE…NTYP), 396 to 505 (SKEE…RRYT), and 517 to 626 (KVTD…GKGL).

Monomer. Post-translationally, phosphorylated. In terms of tissue distribution, in the inner ear, it is expressed in the organ of Corti. Abundant in the utricle (at protein level).

The protein resides in the cytoplasm. It is found in the cell projection. It localises to the stereocilium. Actin-bundling protein. In the inner ear, it is required for stereocilia formation. Mediates liquid packing of actin filaments that is necessary for stereocilia to grow to their proper dimensions. This is Plastin-1 (Pls1) from Mus musculus (Mouse).